The sequence spans 292 residues: MPFQKTIKSEISLTGIGIHTGKKINLNLIPAQRDTGIVFYRKDRNFPIKAKLPFVVDTSFATTLGVDGIKIRTVEHLLATLHVFGITNVFIEIDSSEIPVMDGSAIDFTKAILKAGIAKQGKTVSLFKITKPVYYEESHSKIFAKPYRGFKITYKIFYEHPLIMEQSLSIEINEQNFLNDIAPARTFGFLKDINYLLKNGFAKGGSLDNALVLDEKGVVGGNLRFKDEFVRHKILDAIGDLSLIGYPIQGHFIIEKGGHTSHINFLRKLIETGCYELAEEPYFNFQLSAQAV.

His-76, His-232, and Asp-236 together coordinate Zn(2+). His-259 acts as the Proton donor in catalysis.

This sequence belongs to the LpxC family. Requires Zn(2+) as cofactor.

The catalysed reaction is a UDP-3-O-[(3R)-3-hydroxyacyl]-N-acetyl-alpha-D-glucosamine + H2O = a UDP-3-O-[(3R)-3-hydroxyacyl]-alpha-D-glucosamine + acetate. Its pathway is glycolipid biosynthesis; lipid IV(A) biosynthesis; lipid IV(A) from (3R)-3-hydroxytetradecanoyl-[acyl-carrier-protein] and UDP-N-acetyl-alpha-D-glucosamine: step 2/6. Catalyzes the hydrolysis of UDP-3-O-myristoyl-N-acetylglucosamine to form UDP-3-O-myristoylglucosamine and acetate, the committed step in lipid A biosynthesis. The protein is UDP-3-O-acyl-N-acetylglucosamine deacetylase of Thermodesulfovibrio yellowstonii (strain ATCC 51303 / DSM 11347 / YP87).